We begin with the raw amino-acid sequence, 544 residues long: CTP synthase (544 aa).

The interval 1–265 (MTKFIFVTGG…DNIITEQLQL (265 aa)) is amidoligase domain. A CTP-binding site is contributed by Ser-13. Position 13 (Ser-13) interacts with UTP. ATP contacts are provided by residues 14-19 (SLGKGI) and Asp-71. Mg(2+)-binding residues include Asp-71 and Glu-139. CTP-binding positions include 146 to 148 (DIE), 186 to 191 (KTKPTQ), and Lys-222. UTP-binding positions include 186–191 (KTKPTQ) and Lys-222. The region spanning 290 to 544 (KIAMVGKYVD…VKAALNNKKA (255 aa)) is the Glutamine amidotransferase type-1 domain. Gly-353 provides a ligand contact to L-glutamine. Cys-380 serves as the catalytic Nucleophile; for glutamine hydrolysis. Residues 381–384 (LGMQ), Glu-404, and Arg-471 contribute to the L-glutamine site. Residues His-517 and Glu-519 contribute to the active site.

The protein belongs to the CTP synthase family. Homotetramer.

The catalysed reaction is UTP + L-glutamine + ATP + H2O = CTP + L-glutamate + ADP + phosphate + 2 H(+). It catalyses the reaction L-glutamine + H2O = L-glutamate + NH4(+). The enzyme catalyses UTP + NH4(+) + ATP = CTP + ADP + phosphate + 2 H(+). It participates in pyrimidine metabolism; CTP biosynthesis via de novo pathway; CTP from UDP: step 2/2. Its activity is regulated as follows. Allosterically activated by GTP, when glutamine is the substrate; GTP has no effect on the reaction when ammonia is the substrate. The allosteric effector GTP functions by stabilizing the protein conformation that binds the tetrahedral intermediate(s) formed during glutamine hydrolysis. Inhibited by the product CTP, via allosteric rather than competitive inhibition. Catalyzes the ATP-dependent amination of UTP to CTP with either L-glutamine or ammonia as the source of nitrogen. Regulates intracellular CTP levels through interactions with the four ribonucleotide triphosphates. In Neisseria meningitidis serogroup C / serotype 2a (strain ATCC 700532 / DSM 15464 / FAM18), this protein is CTP synthase.